A 355-amino-acid polypeptide reads, in one-letter code: UDP-3-O-acylglucosamine N-acyltransferase (355 aa).

The Proton acceptor role is filled by H258.

The protein belongs to the transferase hexapeptide repeat family. LpxD subfamily. As to quaternary structure, homotrimer.

It carries out the reaction a UDP-3-O-[(3R)-3-hydroxyacyl]-alpha-D-glucosamine + a (3R)-hydroxyacyl-[ACP] = a UDP-2-N,3-O-bis[(3R)-3-hydroxyacyl]-alpha-D-glucosamine + holo-[ACP] + H(+). The protein operates within bacterial outer membrane biogenesis; LPS lipid A biosynthesis. Its function is as follows. Catalyzes the N-acylation of UDP-3-O-acylglucosamine using 3-hydroxyacyl-ACP as the acyl donor. Is involved in the biosynthesis of lipid A, a phosphorylated glycolipid that anchors the lipopolysaccharide to the outer membrane of the cell. The protein is UDP-3-O-acylglucosamine N-acyltransferase of Agrobacterium fabrum (strain C58 / ATCC 33970) (Agrobacterium tumefaciens (strain C58)).